The following is a 227-amino-acid chain: MKPIPQTEAELLQRANQIAGCSFAELAEEANMDVPLDLKRDKGWVGQLLEWHLGAPAGSKPQQDFSELGIELKSIPVSYSGKPLETTFVCVAPLTGVHGLTWETSHVRNKLSRVLWIPVEGEREIPLAERHVGTPLLWSPNDEEEILLKNDWEELMEMIVFGQFDQISARHGVALHLRPKAANSKALTEAYNINGKPIKTLPRGFYLRTQFTAQILQNAFNSLLNEE.

Belongs to the MutH family.

The protein localises to the cytoplasm. Functionally, sequence-specific endonuclease that cleaves unmethylated GATC sequences. It is involved in DNA mismatch repair. This Vibrio vulnificus (strain CMCP6) protein is DNA mismatch repair protein MutH.